Reading from the N-terminus, the 467-residue chain is ATP synthase subunit beta (467 aa).

Residue 156–163 participates in ATP binding; the sequence is GGAGVGKT.

The protein belongs to the ATPase alpha/beta chains family. In terms of assembly, F-type ATPases have 2 components, CF(1) - the catalytic core - and CF(0) - the membrane proton channel. CF(1) has five subunits: alpha(3), beta(3), gamma(1), delta(1), epsilon(1). CF(0) has three main subunits: a(1), b(2) and c(9-12). The alpha and beta chains form an alternating ring which encloses part of the gamma chain. CF(1) is attached to CF(0) by a central stalk formed by the gamma and epsilon chains, while a peripheral stalk is formed by the delta and b chains.

The protein localises to the cell inner membrane. The enzyme catalyses ATP + H2O + 4 H(+)(in) = ADP + phosphate + 5 H(+)(out). Functionally, produces ATP from ADP in the presence of a proton gradient across the membrane. The catalytic sites are hosted primarily by the beta subunits. The sequence is that of ATP synthase subunit beta from Cupriavidus taiwanensis (strain DSM 17343 / BCRC 17206 / CCUG 44338 / CIP 107171 / LMG 19424 / R1) (Ralstonia taiwanensis (strain LMG 19424)).